Here is a 156-residue protein sequence, read N- to C-terminus: Transcriptional repressor NrdR (156 aa).

Residues 3 to 34 fold into a zinc finger; the sequence is CPYCGHLEDRVVDSRETQDGQATRRRRACLSC. The region spanning 49–139 is the ATP-cone domain; that stretch reads PQVVKKDGRR…VYRAFRDVGE (91 aa).

Belongs to the NrdR family. Zn(2+) is required as a cofactor.

Functionally, negatively regulates transcription of bacterial ribonucleotide reductase nrd genes and operons by binding to NrdR-boxes. The sequence is that of Transcriptional repressor NrdR from Anaeromyxobacter dehalogenans (strain 2CP-C).